The chain runs to 898 residues: Eukaryotic translation initiation factor 3 subunit C (898 aa).

A compositionally biased stretch (basic and acidic residues) spans M1 to D10. Disordered stretches follow at residues M1–D38 and V162–K238. The segment covering S11–E23 has biased composition (acidic residues). Over residues D24 to L37 the composition is skewed to basic and acidic residues. The span at D170–E187 shows a compositional bias: acidic residues. Residues S189–E202 are compositionally biased toward basic and acidic residues. The span at S209–S218 shows a compositional bias: acidic residues. Over residues S219 to N228 the composition is skewed to low complexity. Residues Y630 to P806 form the PCI domain. The interval Q829–F898 is disordered. 2 stretches are compositionally biased toward basic and acidic residues: residues R850–K859 and G866–R878. Basic residues predominate over residues Q888–F898.

Belongs to the eIF-3 subunit C family. In terms of assembly, component of the eukaryotic translation initiation factor 3 (eIF-3) complex.

The protein localises to the cytoplasm. Its function is as follows. Component of the eukaryotic translation initiation factor 3 (eIF-3) complex, which is involved in protein synthesis of a specialized repertoire of mRNAs and, together with other initiation factors, stimulates binding of mRNA and methionyl-tRNAi to the 40S ribosome. The eIF-3 complex specifically targets and initiates translation of a subset of mRNAs involved in cell proliferation. The sequence is that of Eukaryotic translation initiation factor 3 subunit C from Caenorhabditis elegans.